The following is a 690-amino-acid chain: Elongation factor G (690 aa).

A tr-type G domain is found at 8–283; sequence DKYRNIGIMA…AVVDFLPSPL (276 aa). GTP is bound by residues 17-24, 81-85, and 135-138; these read AHIDAGKT, DTPGH, and NKLD.

The protein belongs to the TRAFAC class translation factor GTPase superfamily. Classic translation factor GTPase family. EF-G/EF-2 subfamily.

The protein resides in the cytoplasm. Its function is as follows. Catalyzes the GTP-dependent ribosomal translocation step during translation elongation. During this step, the ribosome changes from the pre-translocational (PRE) to the post-translocational (POST) state as the newly formed A-site-bound peptidyl-tRNA and P-site-bound deacylated tRNA move to the P and E sites, respectively. Catalyzes the coordinated movement of the two tRNA molecules, the mRNA and conformational changes in the ribosome. The chain is Elongation factor G from Zymomonas mobilis subsp. mobilis (strain ATCC 31821 / ZM4 / CP4).